The following is a 388-amino-acid chain: 8-amino-7-oxononanoate synthase (388 aa).

R23 contacts substrate. 110–111 provides a ligand contact to pyridoxal 5'-phosphate; that stretch reads GF. H135 is a substrate binding site. S181, H209, and T235 together coordinate pyridoxal 5'-phosphate. At K238 the chain carries N6-(pyridoxal phosphate)lysine. T352 is a binding site for substrate.

It belongs to the class-II pyridoxal-phosphate-dependent aminotransferase family. BioF subfamily. In terms of assembly, homodimer. Requires pyridoxal 5'-phosphate as cofactor.

It carries out the reaction 6-carboxyhexanoyl-[ACP] + L-alanine + H(+) = (8S)-8-amino-7-oxononanoate + holo-[ACP] + CO2. Its pathway is cofactor biosynthesis; biotin biosynthesis. Functionally, catalyzes the decarboxylative condensation of pimeloyl-[acyl-carrier protein] and L-alanine to produce 8-amino-7-oxononanoate (AON), [acyl-carrier protein], and carbon dioxide. The polypeptide is 8-amino-7-oxononanoate synthase (Sodalis glossinidius (strain morsitans)).